Reading from the N-terminus, the 341-residue chain is 33 kDa chaperonin (341 aa).

2 cysteine pairs are disulfide-bonded: cysteine 245-cysteine 247 and cysteine 278-cysteine 281.

The protein belongs to the HSP33 family. Under oxidizing conditions two disulfide bonds are formed involving the reactive cysteines. Under reducing conditions zinc is bound to the reactive cysteines and the protein is inactive.

The protein localises to the cytoplasm. Functionally, redox regulated molecular chaperone. Protects both thermally unfolding and oxidatively damaged proteins from irreversible aggregation. Plays an important role in the bacterial defense system toward oxidative stress. This is 33 kDa chaperonin from Thermus thermophilus (strain ATCC 27634 / DSM 579 / HB8).